Consider the following 89-residue polypeptide: MVYGYGKSNMPHPNRKRKGTDTQYDYWEELLVMVSGLYALFCVFLVLFIFFDSFKQESNKLELSGKEEKKKLNGENRLSRDIQNLLYIK.

It belongs to the ycf70 family.

Its subcellular location is the plastid. It localises to the chloroplast. This is an uncharacterized protein from Oryza nivara (Indian wild rice).